Here is a 558-residue protein sequence, read N- to C-terminus: Potassium-transporting ATPase potassium-binding subunit (558 aa).

Helical transmembrane passes span 1–21, 60–80, 129–149, 169–189, 246–266, 281–301, 326–346, 353–373, 376–396, 415–435, 485–505, and 523–543; these read MSIVLFLIVFILLSLIVSRYL, IKHFLLFNGLMGGLSFVLLLI, VITFLMFTSAASGYAVCIAML, FIVRVLIPFALIISLFLISQG, WSNYAEALSMMLIPGSLVFLF, IMIFVAMFVMFIGFLVTCLYF, FGIGLSALFTTITTAFTTGTV, LTPLGGMVPMVLMMLNAVFGG, VGLMNMLIYVMLTVFICSLMI, IALSFLVHPLLILVFSALAFI, IVMLLARYIPIVLQILIVSSL, and LFFSSVLIIFIILLSGLTFLP.

The protein belongs to the KdpA family. In terms of assembly, the system is composed of three essential subunits: KdpA, KdpB and KdpC.

Its subcellular location is the cell membrane. Its function is as follows. Part of the high-affinity ATP-driven potassium transport (or Kdp) system, which catalyzes the hydrolysis of ATP coupled with the electrogenic transport of potassium into the cytoplasm. This subunit binds the extracellular potassium ions and delivers the ions to the membrane domain of KdpB through an intramembrane tunnel. The polypeptide is Potassium-transporting ATPase potassium-binding subunit (Staphylococcus haemolyticus (strain JCSC1435)).